Here is an 867-residue protein sequence, read N- to C-terminus: Rifampicin phosphotransferase (867 aa).

An ATP-binding region spans residues 1–314 (MKPYVLKFQE…FYIVQSRPIT (314 aa)). The ATP site is built by K22, R117, G132, T136, Q183, E297, Q309, and R311. A rifampicin-binding region spans residues 327–754 (NRVYISVAHQ…TSDGEMINGE (428 aa)). Rifampicin-binding residues include Q336 and Y351. The tract at residues 767-865 (GLPVSSGTVE…INGTEGYIEI (99 aa)) is swivel phosphohistidine. Residue H825 is the Tele-phosphohistidine intermediate of the active site.

The protein belongs to the rifampicin phosphotransferase family.

It catalyses the reaction rifampicin + ATP + H2O = 21-phosphorifampicin + AMP + phosphate + 2 H(+). Functionally, catalyzes the phosphorylation of rifampicin, also known as rifampin (RIF), leading to its inactivation. Confers high level resistance to a variety of clinically used rifamycin antibiotics. Does not show phosphoenolpyruvate (PEP) synthase activity. This Listeria monocytogenes serotype 4b (strain F2365) protein is Rifampicin phosphotransferase.